Consider the following 181-residue polypeptide: Adenine phosphoribosyltransferase 1 (181 aa).

It belongs to the purine/pyrimidine phosphoribosyltransferase family. As to quaternary structure, homodimer.

It localises to the cytoplasm. The enzyme catalyses AMP + diphosphate = 5-phospho-alpha-D-ribose 1-diphosphate + adenine. It functions in the pathway purine metabolism; AMP biosynthesis via salvage pathway; AMP from adenine: step 1/1. Catalyzes a salvage reaction resulting in the formation of AMP, that is energically less costly than de novo synthesis. The chain is Adenine phosphoribosyltransferase 1 (APT1) from Triticum aestivum (Wheat).